The following is a 545-amino-acid chain: Cannabidiolic acid synthase-like 1 (545 aa).

Positions 1-28 (MKCSTFCFWYVCKIIFFFLSFNIQISIA) are cleaved as a signal peptide. C37 and C99 are disulfide-bonded. N45, N65, N89, and N168 each carry an N-linked (GlcNAc...) asparagine glycan. An FAD-binding PCMH-type domain is found at 77 to 251 (TTPKPLVIIT…AAWKIRLVAV (175 aa)). Residues 114–176 (HDAEGMSYIS…ENLSFPAGYC (63 aa)) constitute a cross-link (6-(S-cysteinyl)-8alpha-(pros-histidyl)-FAD (His-Cys)). A substrate-binding site is contributed by H292. N-linked (GlcNAc...) asparagine glycans are attached at residues N297, N305, N329, and N361. Residue Y417 participates in substrate binding. N-linked (GlcNAc...) asparagine glycosylation is present at N467. Y484 functions as the Proton acceptor in the catalytic mechanism. A glycan (N-linked (GlcNAc...) asparagine) is linked at N499.

The protein belongs to the oxygen-dependent FAD-linked oxidoreductase family. FAD serves as cofactor. The FAD cofactor is bound via a bicovalent 6-S-cysteinyl, 8alpha-N1-histidyl FAD linkage.

It is found in the secreted. In terms of biological role, has no cannabidiolic acid synthase activity. The polypeptide is Cannabidiolic acid synthase-like 1 (CBDAS2) (Cannabis sativa (Hemp)).